We begin with the raw amino-acid sequence, 181 residues long: Adenine phosphoribosyltransferase (181 aa).

It belongs to the purine/pyrimidine phosphoribosyltransferase family. In terms of assembly, homodimer.

It is found in the cytoplasm. It catalyses the reaction AMP + diphosphate = 5-phospho-alpha-D-ribose 1-diphosphate + adenine. The protein operates within purine metabolism; AMP biosynthesis via salvage pathway; AMP from adenine: step 1/1. Functionally, catalyzes a salvage reaction resulting in the formation of AMP, that is energically less costly than de novo synthesis. This chain is Adenine phosphoribosyltransferase, found in Methylorubrum populi (strain ATCC BAA-705 / NCIMB 13946 / BJ001) (Methylobacterium populi).